The sequence spans 98 residues: Integration host factor subunit beta (98 aa).

The disordered stretch occupies residues 59–98 (RTGRNPKTGESVTLPGKYVPHFKPGKEMRDRVNESIQSEG). Residues 82 to 91 (PGKEMRDRVN) are compositionally biased toward basic and acidic residues.

The protein belongs to the bacterial histone-like protein family. As to quaternary structure, heterodimer of an alpha and a beta chain.

This protein is one of the two subunits of integration host factor, a specific DNA-binding protein that functions in genetic recombination as well as in transcriptional and translational control. This is Integration host factor subunit beta from Saccharophagus degradans (strain 2-40 / ATCC 43961 / DSM 17024).